The primary structure comprises 125 residues: Large ribosomal subunit protein bL17 (125 aa).

This sequence belongs to the bacterial ribosomal protein bL17 family. Part of the 50S ribosomal subunit. Contacts protein L32.

The sequence is that of Large ribosomal subunit protein bL17 from Acinetobacter baumannii (strain AB307-0294).